The primary structure comprises 410 residues: MQRLLFPPLRALKGRQYLPLLAPRAAPRAQCDCIRRPLRPGQYSTISEVALQSGRGTVSLPSKAAERVVGRWLLVCSGTVAGAVILGGVTRLTESGLSMVDWHLIKEMKPPTSQEEWEAEFQRYQQFPEFKILNHDMTLTEFKFIWYMEYSHRMWGRLVGLVYILPAAYFWRKGWLSRGMKGRVLALCGLVCFQGLLGWYMVKSGLEEKSDSHDIPRVSQYRLAAHLGSALVLYCASLWTSLSLLLPPHKLPETHQLLQLRRFAHGTAGLVFLTALSGAFVAGLDAGLVYNSFPKMGESWIPEDLFTFSPILRNVFENPTMVQFDHRILGITSVTAITVLYFLSRRIPLPRRTKMAAVTLLALAYTQVGLGISTLLMYVPTPLAATHQSGSLALLTGALWLMNELRRVPK.

The Mitochondrial matrix portion of the chain corresponds to 1-67 (MQRLLFPPLR…VSLPSKAAER (67 aa)). The chain crosses the membrane as a helical span at residues 68-88 (VVGRWLLVCSGTVAGAVILGG). Residues 89–153 (VTRLTESGLS…FIWYMEYSHR (65 aa)) lie on the Mitochondrial intermembrane side of the membrane. Position 152 (His152) interacts with heme o. A helical transmembrane segment spans residues 154–171 (MWGRLVGLVYILPAAYFW). Over 172 to 183 (RKGWLSRGMKGR) the chain is Mitochondrial matrix. Residues 184 to 204 (VLALCGLVCFQGLLGWYMVKS) form a helical membrane-spanning segment. The Mitochondrial intermembrane portion of the chain corresponds to 205-226 (GLEEKSDSHDIPRVSQYRLAAH). Position 226 (His226) interacts with heme o. The chain crosses the membrane as a helical span at residues 227–247 (LGSALVLYCASLWTSLSLLLP). Residues 248-268 (PHKLPETHQLLQLRRFAHGTA) are Mitochondrial matrix-facing. Residues 269–289 (GLVFLTALSGAFVAGLDAGLV) traverse the membrane as a helical segment. Residues 290 to 323 (YNSFPKMGESWIPEDLFTFSPILRNVFENPTMVQ) are Mitochondrial intermembrane-facing. A helical transmembrane segment spans residues 324–344 (FDHRILGITSVTAITVLYFLS). Position 326 (His326) interacts with heme b. The Mitochondrial matrix portion of the chain corresponds to 345–356 (RRIPLPRRTKMA). Residues 357–377 (AVTLLALAYTQVGLGISTLLM) form a helical membrane-spanning segment. Residues 378 to 381 (YVPT) are Mitochondrial intermembrane-facing. Residues 382–402 (PLAATHQSGSLALLTGALWLM) traverse the membrane as a helical segment. His387 serves as a coordination point for heme b. Residues 403 to 410 (NELRRVPK) lie on the Mitochondrial matrix side of the membrane.

This sequence belongs to the COX15/CtaA family. Type 2 subfamily. Requires heme b as cofactor. Predominantly found in tissues characterized by high rates of oxidative phosphorylation (OxPhos), including muscle, heart, and brain.

The protein resides in the mitochondrion inner membrane. The enzyme catalyses Fe(II)-heme o + 2 A + H2O = Fe(II)-heme a + 2 AH2. It functions in the pathway porphyrin-containing compound metabolism; heme A biosynthesis; heme A from heme O: step 1/1. Functionally, catalyzes the second reaction in the biosynthesis of heme A, a prosthetic group of mitochondrial cytochrome c oxidase (CcO). Heme A is synthesized from heme B by two sequential enzymatic reactions catalyzed by heme O synthase (HOS) and heme A synthase (HAS). HAS catalyzes the conversion of heme O to heme A by two successive hydroxylations of the methyl group at C8, in a reaction that involves matrix ferredoxin and ferredoxin reductase. The first hydroxylation forms heme I, the second hydroxylation results in an unstable dihydroxymethyl group, which spontaneously dehydrates, resulting in the formyl group of heme A. The chain is Heme A synthase COX15 (COX15) from Homo sapiens (Human).